The chain runs to 211 residues: Late expression factor 7 (211 aa).

Its function is as follows. Involved in late/very late gene activation. This is Late expression factor 7 (LEF-7) from Orgyia pseudotsugata multicapsid polyhedrosis virus (OpMNPV).